The primary structure comprises 392 residues: Tyrosine--tRNA ligase (392 aa).

Positions Pro41–His50 match the 'HIGH' region motif. A 'KMSKS' region motif is present at residues Lys225 to Ser229. Lys228 contacts ATP. One can recognise an S4 RNA-binding domain in the interval Leu330 to Val390.

It belongs to the class-I aminoacyl-tRNA synthetase family. TyrS type 2 subfamily. As to quaternary structure, homodimer.

It is found in the cytoplasm. The enzyme catalyses tRNA(Tyr) + L-tyrosine + ATP = L-tyrosyl-tRNA(Tyr) + AMP + diphosphate + H(+). Catalyzes the attachment of tyrosine to tRNA(Tyr) in a two-step reaction: tyrosine is first activated by ATP to form Tyr-AMP and then transferred to the acceptor end of tRNA(Tyr). This is Tyrosine--tRNA ligase from Aquifex aeolicus (strain VF5).